The primary structure comprises 215 residues: Probable phosphoglycerate mutase GpmB (215 aa).

Substrate contacts are provided by residues 8–15, 21–22, arginine 58, arginine 60, 82–85, 104–105, and 151–152; these read RHGETQWN, QG, ELNM, RR, and GI. The active-site Tele-phosphohistidine intermediate is the histidine 9. Glutamate 82 acts as the Proton donor/acceptor in catalysis.

Belongs to the phosphoglycerate mutase family. GpmB subfamily.

The enzyme catalyses (2R)-2-phosphoglycerate = (2R)-3-phosphoglycerate. It functions in the pathway carbohydrate degradation; glycolysis; pyruvate from D-glyceraldehyde 3-phosphate: step 3/5. In Escherichia coli O1:K1 / APEC, this protein is Probable phosphoglycerate mutase GpmB.